The chain runs to 395 residues: ATP phosphoribosyltransferase regulatory subunit (395 aa).

The protein belongs to the class-II aminoacyl-tRNA synthetase family. HisZ subfamily. Heteromultimer composed of HisG and HisZ subunits.

The protein localises to the cytoplasm. It participates in amino-acid biosynthesis; L-histidine biosynthesis; L-histidine from 5-phospho-alpha-D-ribose 1-diphosphate: step 1/9. Required for the first step of histidine biosynthesis. May allow the feedback regulation of ATP phosphoribosyltransferase activity by histidine. This chain is ATP phosphoribosyltransferase regulatory subunit, found in Azotobacter vinelandii (strain DJ / ATCC BAA-1303).